The following is a 598-amino-acid chain: Pentatricopeptide repeat-containing protein At1g09900 (598 aa).

14 PPR repeats span residues 101–135 (EDVE…GNVP), 136–170 (DIIP…GAVP), 171–201 (DVIT…MSVS), 203–237 (DVVT…DCYP), 238–272 (DVIT…GCTP), 273–307 (DVVT…GCQP), 308–342 (NVIT…GFSP), 343–377 (SVVT…GCQP), 378–412 (NSLS…GCYP), 413–447 (DIVT…GCSP), 448–482 (VLIT…DLKP), 483–517 (DTIT…GIRP), 518–552 (NAVT…GCKP), and 553–587 (NETS…GLMK).

This sequence belongs to the PPR family. P subfamily.

The sequence is that of Pentatricopeptide repeat-containing protein At1g09900 from Arabidopsis thaliana (Mouse-ear cress).